Consider the following 934-residue polypeptide: Protein translocase subunit SecA (934 aa).

Residues glutamine 87, 105–109 (GEGKT), and aspartate 515 contribute to the ATP site. The Zn(2+) site is built by cysteine 918, cysteine 920, cysteine 929, and histidine 930.

The protein belongs to the SecA family. In terms of assembly, monomer and homodimer. Part of the essential Sec protein translocation apparatus which comprises SecA, SecYEG and auxiliary proteins SecDF-YajC and YidC. It depends on Zn(2+) as a cofactor.

The protein resides in the cell inner membrane. Its subcellular location is the cytoplasm. The catalysed reaction is ATP + H2O + cellular proteinSide 1 = ADP + phosphate + cellular proteinSide 2.. Its function is as follows. Part of the Sec protein translocase complex. Interacts with the SecYEG preprotein conducting channel. Has a central role in coupling the hydrolysis of ATP to the transfer of proteins into and across the cell membrane, serving both as a receptor for the preprotein-SecB complex and as an ATP-driven molecular motor driving the stepwise translocation of polypeptide chains across the membrane. The chain is Protein translocase subunit SecA from Ralstonia nicotianae (strain ATCC BAA-1114 / GMI1000) (Ralstonia solanacearum).